We begin with the raw amino-acid sequence, 437 residues long: MFLAFDDTDSPSGMCTTYLMEEFLRKVNLDVIGYPRLVRLNPNIRYKTRGNGALSVHLGRGIGKKHTIGELHGKILYGYAEGEDEYDENVLYVMKDLVEKYSELDYFNTNPGIVVSKNPFPENYYWSALEREIRIEEAENFITENNGKFLKFKSGRGIIGSGAAISWPATRTTYEILAYKYPHPEEIETEKKMRLSILADTFRGTFNNVDIANKYPAIFPNPKTPVIFGIRGLYPSVLANAAKKVIDDGSINYDSTVTYLTNQATDDHIIDEPNVIEDLHSYKITAEIIDKPFSVAGGHYFVRSISRAGEFTAAAFEPTKEFRHTFSKLMPGDTVTFYGSFTNGNLNVEKMQIISVSRVFSRVTPLCKFCNTRTKSKGKNDFRCPKCGRRYNTPDYHEVKREISPGKYDVPVVARRHLSMPFEIESMFKTKINALEA.

Belongs to the TiaS family.

The protein localises to the cytoplasm. It catalyses the reaction cytidine(34) in tRNA(Ile2) + agmatine + ATP + H2O = 2-agmatinylcytidine(34) in tRNA(Ile2) + AMP + 2 phosphate + 2 H(+). Its function is as follows. ATP-dependent agmatine transferase that catalyzes the formation of 2-agmatinylcytidine (agm2C) at the wobble position (C34) of tRNA(Ile2), converting the codon specificity from AUG to AUA. The chain is tRNA(Ile2) 2-agmatinylcytidine synthetase TiaS from Thermoplasma volcanium (strain ATCC 51530 / DSM 4299 / JCM 9571 / NBRC 15438 / GSS1).